The sequence spans 440 residues: uncharacterized protein (440 aa).

The first 17 residues, 1–17 (MDRFFCTVWVWSVLFGA), serve as a signal peptide directing secretion. C18 carries N-palmitoyl cysteine lipidation. The S-diacylglycerol cysteine moiety is linked to residue C18. Residues 241–268 (SALQERPSSPEPVVSTIPSPEGEENSAA) are disordered.

It is found in the cell membrane. This is an uncharacterized protein from Treponema pallidum (strain Nichols).